Consider the following 1020-residue polypeptide: Glycine dehydrogenase (decarboxylating), mitochondrial (1020 aa).

A mitochondrion-targeting transit peptide spans M1–R35. The interval R21–A46 is disordered. An N6-acetyllysine mark is found at K447, K514, K648, and K664. K754 carries the N6-(pyridoxal phosphate)lysine modification.

Belongs to the GcvP family. Homodimer. Interacts with GCSH. The glycine cleavage system is composed of four proteins: P (GLDC), T (GCST), L (DLD) and H (GCSH). The cofactor is pyridoxal 5'-phosphate.

The protein localises to the mitochondrion. The catalysed reaction is N(6)-[(R)-lipoyl]-L-lysyl-[glycine-cleavage complex H protein] + glycine + H(+) = N(6)-[(R)-S(8)-aminomethyldihydrolipoyl]-L-lysyl-[glycine-cleavage complex H protein] + CO2. Its activity is regulated as follows. Stimulated by lipoic acid. Inhibited in presence of methylamine. Its function is as follows. The glycine cleavage system catalyzes the degradation of glycine. The P protein (GLDC) binds the alpha-amino group of glycine through its pyridoxal phosphate cofactor; CO(2) is released and the remaining methylamine moiety is then transferred to the lipoamide cofactor of the H protein (GCSH). The sequence is that of Glycine dehydrogenase (decarboxylating), mitochondrial from Homo sapiens (Human).